The chain runs to 261 residues: Cyclin-J18-like (261 aa).

It belongs to the cyclin family.

This Oryza sativa subsp. japonica (Rice) protein is Cyclin-J18-like.